A 146-amino-acid polypeptide reads, in one-letter code: Nucleoside diphosphate kinase (146 aa).

ATP contacts are provided by K11, F59, R87, T93, R104, and N114. H117 acts as the Pros-phosphohistidine intermediate in catalysis.

The protein belongs to the NDK family. As to quaternary structure, homotetramer. The cofactor is Mg(2+).

It is found in the cytoplasm. It carries out the reaction a 2'-deoxyribonucleoside 5'-diphosphate + ATP = a 2'-deoxyribonucleoside 5'-triphosphate + ADP. It catalyses the reaction a ribonucleoside 5'-diphosphate + ATP = a ribonucleoside 5'-triphosphate + ADP. In terms of biological role, major role in the synthesis of nucleoside triphosphates other than ATP. The ATP gamma phosphate is transferred to the NDP beta phosphate via a ping-pong mechanism, using a phosphorylated active-site intermediate. This is Nucleoside diphosphate kinase from Anaplasma marginale (strain Florida).